The chain runs to 205 residues: Guanylate kinase (205 aa).

The Guanylate kinase-like domain maps to 6 to 184; sequence GLLIVLSGPA…AVERIKAIVT (179 aa). 13–20 is an ATP binding site; that stretch reads GPAGVGKG.

The protein belongs to the guanylate kinase family.

The protein localises to the cytoplasm. The enzyme catalyses GMP + ATP = GDP + ADP. Its function is as follows. Essential for recycling GMP and indirectly, cGMP. This chain is Guanylate kinase, found in Shouchella clausii (strain KSM-K16) (Alkalihalobacillus clausii).